We begin with the raw amino-acid sequence, 184 residues long: Dual specificity protein phosphatase 22 (184 aa).

A lipid anchor (N-myristoyl glycine) is attached at Gly-2. In terms of domain architecture, Tyrosine-protein phosphatase spans 4 to 144 (GMSQILPGLY…LQEFEKHEVH (141 aa)). Cys-88 acts as the Phosphocysteine intermediate in catalysis. Residues Leu-89, Ala-90, Val-92, Ser-93, and Arg-94 each contribute to the a protein site.

It belongs to the protein-tyrosine phosphatase family. Non-receptor class dual specificity subfamily. Monomer. Interacts with LCK; the interaction is direct. Interacts with UBR2; the interaction is direct. Post-translationally, myristoylation regulates subcellular location, and is necessary for activation of JNK.

The protein resides in the cytoplasm. It carries out the reaction O-phospho-L-tyrosyl-[protein] + H2O = L-tyrosyl-[protein] + phosphate. It catalyses the reaction O-phospho-L-seryl-[protein] + H2O = L-seryl-[protein] + phosphate. The catalysed reaction is O-phospho-L-threonyl-[protein] + H2O = L-threonyl-[protein] + phosphate. Functionally, dual specificity phosphatase; can dephosphorylate both phosphotyrosine and phosphoserine or phosphothreonine residues. Activates the JNK signaling pathway. Inhibits T-cell receptor signaling and T-cell mediated immune responses, acting, at least in part, by inducing degradation of E3 ubiquitin ligase UBR2. Dephosphorylates and thereby induces 'Lys-48'-linked ubiquitination of UBR2, leading to proteasomal degradation of UBR2. Dephosphorylates and thereby inactivates tyrosine kinase LCK. Inhibits UBR2-mediated 'Lys-63'-linked ubiquitination of LCK. May play a role in B-cell receptor (BCR) signaling and B-cell function. In Mus musculus (Mouse), this protein is Dual specificity protein phosphatase 22 (Dusp22).